Consider the following 901-residue polypeptide: Pyruvate, phosphate dikinase (901 aa).

The N-terminal stretch occupies residues 1 to 321 (MNIAKSIHFL…WLIEQKPVEA (321 aa)). Positions 322-380 (KSTISLVRLLLDLYEREVVDAEYVVKSVKPGQLNEILHPVIDMTSVTGLKSSQGGIIGV) are linker 1. The tract at residues 381–482 (PGAAVGRVYF…TINEGDFVTL (102 aa)) is central. Serine 440 is subject to Phosphoserine; by PDRP1. The active-site Tele-phosphohistidine intermediate is histidine 442. The interval 483-522 (NVPYYGESTLYMGAAQLIEPDPETSGLVSFIELAKGFVRS) is linker 2. Residues 523-901 (FHVRANADSP…SAKSGGRRAR (379 aa)) are C-terminal. Residues arginine 550, arginine 606, glutamate 750, glycine 771, threonine 772, asparagine 773, and aspartate 774 each contribute to the substrate site. Glutamate 750 serves as a coordination point for Mg(2+). Residue aspartate 774 participates in Mg(2+) binding. Cysteine 835 functions as the Proton donor in the catalytic mechanism. Positions 879–901 (EKEGRKPAWRGRSSAKSGGRRAR) are disordered.

This sequence belongs to the PEP-utilizing enzyme family. Homodimer. The cofactor is Mg(2+). In terms of processing, phosphorylation of Ser-440 in the dark inactivates the enzyme. Dephosphorylation upon light stimulation reactivates the enzyme.

The enzyme catalyses pyruvate + phosphate + ATP = phosphoenolpyruvate + AMP + diphosphate + H(+). Activated by light-induced dephosphorylation. Inhibited by dark-induced phosphorylation. Both reactions are catalyzed by PDRP1. In terms of biological role, catalyzes the reversible phosphorylation of pyruvate and phosphate. This chain is Pyruvate, phosphate dikinase (ppdK), found in Treponema pallidum (strain Nichols).